A 3779-amino-acid polypeptide reads, in one-letter code: Protein DDB_G0268328 (3779 aa).

12 disordered regions span residues 24 to 56, 1001 to 1028, 1137 to 1165, 1513 to 1538, 1656 to 1690, 2027 to 2054, 2144 to 2184, 2280 to 2325, 2508 to 2527, 2720 to 2748, 2975 to 3030, and 3427 to 3450; these read RQIK…KDGS, HEDE…DDDD, QDST…QQQQ, PTNS…SLLS, ETTV…NNKE, SNSS…DSNN, NNNN…NNSS, ISTT…NEQQ, QINN…REEG, DGNN…NDSS, ESND…DSIK, and QSNT…SGKL. Low complexity-rich tracts occupy residues 26–56, 1011–1020, 1149–1165, and 1515–1538; these read IKSQ…KDGS, DNSNNSNSQD, YYHQ…QQQQ, and NSIY…SLLS. Positions 1656–1671 are enriched in basic and acidic residues; sequence ETTVLEKETKETKDNN. Positions 1672–1687 are enriched in low complexity; that stretch reads LENNNNNTNNSNNNNN. 2 stretches are compositionally biased toward low complexity: residues 2144–2182 and 2285–2322; these read NNNN…NNNN. 2 stretches are compositionally biased toward low complexity: residues 2722–2745 and 3015–3030; these read NNNN…QNNN and SVNN…DSIK. Over residues 3433–3446 the composition is skewed to gly residues; that stretch reads GTGGGGGNGGGNNG.

The sequence is that of Protein DDB_G0268328 from Dictyostelium discoideum (Social amoeba).